Consider the following 310-residue polypeptide: Tagatose-6-phosphate kinase (310 aa).

It belongs to the carbohydrate kinase PfkB family. LacC subfamily.

It catalyses the reaction D-tagatofuranose 6-phosphate + ATP = D-tagatofuranose 1,6-bisphosphate + ADP + H(+). Its pathway is carbohydrate metabolism; D-tagatose 6-phosphate degradation; D-glyceraldehyde 3-phosphate and glycerone phosphate from D-tagatose 6-phosphate: step 1/2. The sequence is that of Tagatose-6-phosphate kinase from Staphylococcus epidermidis (strain ATCC 35984 / DSM 28319 / BCRC 17069 / CCUG 31568 / BM 3577 / RP62A).